The chain runs to 243 residues: 2,3-bisphosphoglycerate-dependent phosphoglycerate mutase (243 aa).

Substrate contacts are provided by residues 8 to 15 (RHGQSEWN), 21 to 22 (TG), arginine 60, 87 to 90 (ERHY), lysine 98, 114 to 115 (RR), and 183 to 184 (GN). The Tele-phosphohistidine intermediate role is filled by histidine 9. Glutamate 87 (proton donor/acceptor) is an active-site residue.

The protein belongs to the phosphoglycerate mutase family. BPG-dependent PGAM subfamily.

It carries out the reaction (2R)-2-phosphoglycerate = (2R)-3-phosphoglycerate. Its pathway is carbohydrate degradation; glycolysis; pyruvate from D-glyceraldehyde 3-phosphate: step 3/5. In terms of biological role, catalyzes the interconversion of 2-phosphoglycerate and 3-phosphoglycerate. This is 2,3-bisphosphoglycerate-dependent phosphoglycerate mutase from Clostridium acetobutylicum (strain ATCC 824 / DSM 792 / JCM 1419 / IAM 19013 / LMG 5710 / NBRC 13948 / NRRL B-527 / VKM B-1787 / 2291 / W).